The following is a 227-amino-acid chain: ATP-dependent dethiobiotin synthetase BioD (227 aa).

Residue 12–17 (DVGKTV) coordinates ATP. Threonine 16 is a Mg(2+) binding site. Residue lysine 37 is part of the active site. Residue threonine 41 participates in substrate binding. ATP contacts are provided by residues aspartate 50, 110–113 (EGAG), 171–172 (GS), and 201–203 (PAG). Positions 50 and 110 each coordinate Mg(2+).

It belongs to the dethiobiotin synthetase family. As to quaternary structure, homodimer. Mg(2+) serves as cofactor.

It localises to the cytoplasm. It carries out the reaction (7R,8S)-7,8-diammoniononanoate + CO2 + ATP = (4R,5S)-dethiobiotin + ADP + phosphate + 3 H(+). It participates in cofactor biosynthesis; biotin biosynthesis; biotin from 7,8-diaminononanoate: step 1/2. Functionally, catalyzes a mechanistically unusual reaction, the ATP-dependent insertion of CO2 between the N7 and N8 nitrogen atoms of 7,8-diaminopelargonic acid (DAPA, also called 7,8-diammoniononanoate) to form a ureido ring. This chain is ATP-dependent dethiobiotin synthetase BioD, found in Rhodococcus erythropolis (strain PR4 / NBRC 100887).